Reading from the N-terminus, the 377-residue chain is Spermidine/putrescine import ATP-binding protein PotA (377 aa).

Positions 18-248 (IRLSGISKSF…PKNLFVARFI (231 aa)) constitute an ABC transporter domain. 50-57 (GPSGCGKT) contributes to the ATP binding site.

It belongs to the ABC transporter superfamily. Spermidine/putrescine importer (TC 3.A.1.11.1) family. As to quaternary structure, the complex is composed of two ATP-binding proteins (PotA), two transmembrane proteins (PotB and PotC) and a solute-binding protein (PotD).

The protein resides in the cell inner membrane. The enzyme catalyses ATP + H2O + polyamine-[polyamine-binding protein]Side 1 = ADP + phosphate + polyamineSide 2 + [polyamine-binding protein]Side 1.. Part of the ABC transporter complex PotABCD involved in spermidine/putrescine import. Responsible for energy coupling to the transport system. The protein is Spermidine/putrescine import ATP-binding protein PotA of Vibrio vulnificus (strain CMCP6).